A 69-amino-acid polypeptide reads, in one-letter code: DNA gyrase inhibitor YacG (69 aa).

Residues Cys7, Cys10, Cys26, and Cys30 each contribute to the Zn(2+) site.

Belongs to the DNA gyrase inhibitor YacG family. Interacts with GyrB. Zn(2+) is required as a cofactor.

Inhibits all the catalytic activities of DNA gyrase by preventing its interaction with DNA. Acts by binding directly to the C-terminal domain of GyrB, which probably disrupts DNA binding by the gyrase. This chain is DNA gyrase inhibitor YacG, found in Shewanella sp. (strain W3-18-1).